Reading from the N-terminus, the 240-residue chain is Seed lectin (240 aa).

Asn111 carries N-linked (GlcNAc...) asparagine glycosylation. Mn(2+)-binding residues include Glu123 and Asp125. Asp125, Asn129, and Asp132 together coordinate Ca(2+). Mn(2+) contacts are provided by Asp132 and His137. Residue Asn183 is glycosylated (N-linked (GlcNAc...) asparagine).

It belongs to the leguminous lectin family. As to quaternary structure, homotetramer. Partially N-glycosylated at Asn-111 and Asn-183 with the heptasaccharide [(beta-xylosyl-1,2)(alpha-mannosyl-1,6)(alpha-mannosyl-1,3)]beta-manosyl-1,4-GlcNAC-beta-1,4-GlcNAc-beta-1,4 [alpha-fucosyl-1,3]GlcNAc. A small proportion of alpha chains are proteolytically cleaved at 114-115 into gamma and beta chains. This is probably dependent on the deglycosylation of Asn-111. As to expression, seed.

Its function is as follows. Lectin that binds galactose. The chain is Seed lectin from Vatairea macrocarpa.